A 738-amino-acid polypeptide reads, in one-letter code: Dipeptidyl peptidase 3 (738 aa).

Alanine 2 carries the N-acetylalanine modification. Histidine 450 serves as a coordination point for Zn(2+). Glutamate 451 is an active-site residue. Positions 455 and 508 each coordinate Zn(2+).

This sequence belongs to the peptidase M49 family. The cofactor is Zn(2+).

The protein resides in the cytoplasm. It localises to the cytosol. The catalysed reaction is Release of an N-terminal dipeptide from a peptide comprising four or more residues, with broad specificity. Also acts on dipeptidyl 2-naphthylamides.. In terms of biological role, cleaves and degrades bioactive peptides, including angiotensin, Leu-enkephalin and Met-enkephalin. Also cleaves Arg-Arg-beta-naphthylamide (in vitro). This Mus musculus (Mouse) protein is Dipeptidyl peptidase 3 (Dpp3).